Here is a 1927-residue protein sequence, read N- to C-terminus: Integrin beta-like protein A (1927 aa).

A signal peptide spans 1 to 20 (MNRILTLFILFISLFIVCEA). Residues 21-1860 (THFRFGTMSW…KENNNKTVLT (1840 aa)) lie on the Extracellular side of the membrane. N309 carries N-linked (GlcNAc...) asparagine glycosylation. Residues 425–462 (YGEKCDPVDPCVNGESNEGSQGNGKCTCYYGWEGKNCD) form the EGF-like domain. 2 disulfide bridges follow: C435-C450 and C452-C461. The VWFA domain maps to 522-709 (EVLVLVDSQP…VLSKAVVKAI (188 aa)). N1122, N1516, N1717, N1723, and N1855 each carry an N-linked (GlcNAc...) asparagine glycan. The chain crosses the membrane as a helical span at residues 1861–1881 (GAIAGAAAGAGLLAAGAWFLL). Residues 1882 to 1927 (KKSAPPTDAFFGEGAFADGAVSTNPMYEESGRSAINPLYEASSENL) lie on the Cytoplasmic side of the membrane.

The protein belongs to the SIB family. In terms of assembly, interacts with talA/talin.

It is found in the membrane. Functionally, implicated in cellular adhesion to substrate or phagocytic particles. The polypeptide is Integrin beta-like protein A (sibA) (Dictyostelium discoideum (Social amoeba)).